Here is a 156-residue protein sequence, read N- to C-terminus: MNINSTLFLQAIVFAILVWFTMKFVWPPITKALDERAQKIADGLAAADKAKSELSSANKRVEAELALSRTETTARLADADRRGQSIVEEAKSKATEEANKIIAAAKVEAEQQSNKAREVLREQVAALAVKGAEQILRKEVNASVHADLLGRLKLEL.

Residues Leu-7–Pro-27 traverse the membrane as a helical segment.

Belongs to the ATPase B chain family. As to quaternary structure, F-type ATPases have 2 components, F(1) - the catalytic core - and F(0) - the membrane proton channel. F(1) has five subunits: alpha(3), beta(3), gamma(1), delta(1), epsilon(1). F(0) has three main subunits: a(1), b(2) and c(10-14). The alpha and beta chains form an alternating ring which encloses part of the gamma chain. F(1) is attached to F(0) by a central stalk formed by the gamma and epsilon chains, while a peripheral stalk is formed by the delta and b chains.

The protein localises to the cell inner membrane. Functionally, f(1)F(0) ATP synthase produces ATP from ADP in the presence of a proton or sodium gradient. F-type ATPases consist of two structural domains, F(1) containing the extramembraneous catalytic core and F(0) containing the membrane proton channel, linked together by a central stalk and a peripheral stalk. During catalysis, ATP synthesis in the catalytic domain of F(1) is coupled via a rotary mechanism of the central stalk subunits to proton translocation. Component of the F(0) channel, it forms part of the peripheral stalk, linking F(1) to F(0). The chain is ATP synthase subunit b 1 from Albidiferax ferrireducens (strain ATCC BAA-621 / DSM 15236 / T118) (Rhodoferax ferrireducens).